Consider the following 446-residue polypeptide: N-succinylarginine dihydrolase (446 aa).

Residues 19–28 (AGLSFGNVAS), Asn-110, and 137–138 (HR) each bind substrate. Residue Glu-174 is part of the active site. Residue Arg-213 coordinates substrate. His-249 is a catalytic residue. Residues Asp-251 and Asn-364 each coordinate substrate. Cys-370 functions as the Nucleophile in the catalytic mechanism.

Belongs to the succinylarginine dihydrolase family. As to quaternary structure, homodimer.

The enzyme catalyses N(2)-succinyl-L-arginine + 2 H2O + 2 H(+) = N(2)-succinyl-L-ornithine + 2 NH4(+) + CO2. It functions in the pathway amino-acid degradation; L-arginine degradation via AST pathway; L-glutamate and succinate from L-arginine: step 2/5. Functionally, catalyzes the hydrolysis of N(2)-succinylarginine into N(2)-succinylornithine, ammonia and CO(2). This is N-succinylarginine dihydrolase from Burkholderia multivorans (strain ATCC 17616 / 249).